An 81-amino-acid chain; its full sequence is Large ribosomal subunit protein bL31B (81 aa).

It belongs to the bacterial ribosomal protein bL31 family. Type B subfamily. Part of the 50S ribosomal subunit.

The polypeptide is Large ribosomal subunit protein bL31B (Borreliella afzelii (strain PKo) (Borrelia afzelii)).